Reading from the N-terminus, the 463-residue chain is MNTNQIILTNQNDNSVNVWSNVTQDLYNYYGEALYNSWFSKVNFIESSLNTVILCAPTNFIRDWIKSKYSVVILQLFQHYNNAIKTVEIITKELPASNQATLELPTKTFADIGSSELNSENIFSTFDIRFTFDNFVVGAPNELAYAAARAVAESSSAVSESNPLFLYGGVGLGKTHLMHAIGWYIKQNNPSRKVIYMSAEKFMYQFVKALRNKEVMSFKEKFRSVDVLMIDDIQFICGKDSTQEEFFHTFNTLIDNNRQMVISCDRSPSDLDDIEDRIKSRLGWGLVADVHSTTYELRLGILESKIEQMNVKVPKDAIDFLASKIVSNVRELEGALNKVIAHSNFTAKEITLENTQNILRDLLRSNERIITVEDIQKKVANRYNIKLSDMSSPRRMRTIARPRQIAMYLSKILTPKSLVDIGKKFGKKDHTTVMHAIKKVEELLESDLELREEINLMMKILQN.

A domain I, interacts with DnaA modulators region spans residues 1–84; the sequence is MNTNQIILTN…QLFQHYNNAI (84 aa). The segment at 84-124 is domain II; it reads IKTVEIITKELPASNQATLELPTKTFADIGSSELNSENIFS. The interval 125-343 is domain III, AAA+ region; that stretch reads TFDIRFTFDN…GALNKVIAHS (219 aa). Residues Gly-171, Gly-173, Lys-174, and Thr-175 each coordinate ATP. Residues 344-463 form a domain IV, binds dsDNA region; the sequence is NFTAKEITLE…INLMMKILQN (120 aa).

The protein belongs to the DnaA family. Oligomerizes as a right-handed, spiral filament on DNA at oriC.

The protein localises to the cytoplasm. Functionally, plays an essential role in the initiation and regulation of chromosomal replication. ATP-DnaA binds to the origin of replication (oriC) to initiate formation of the DNA replication initiation complex once per cell cycle. Binds the DnaA box (a 9 base pair repeat at the origin) and separates the double-stranded (ds)DNA. Forms a right-handed helical filament on oriC DNA; dsDNA binds to the exterior of the filament while single-stranded (ss)DNA is stabiized in the filament's interior. The ATP-DnaA-oriC complex binds and stabilizes one strand of the AT-rich DNA unwinding element (DUE), permitting loading of DNA polymerase. After initiation quickly degrades to an ADP-DnaA complex that is not apt for DNA replication. Binds acidic phospholipids. This chain is Chromosomal replication initiator protein DnaA, found in Rickettsia bellii (strain OSU 85-389).